The following is a 401-amino-acid chain: Riboflavin biosynthesis protein RibBA (401 aa).

The interval 1-203 is DHBP synthase; it reads MTDFQFSKVE…IQQLQEYRRK (203 aa). Residues 30 to 31, Asp-35, 142 to 146, and Glu-166 each bind D-ribulose 5-phosphate; these read RE and RNGHT. A Mg(2+)-binding site is contributed by Glu-31. Residue His-145 participates in Mg(2+) binding. The interval 204–401 is GTP cyclohydrolase II; the sequence is HDSLVKQISV…QIKMGHMFNF (198 aa). 254–258 contacts GTP; it reads RIHSE. Zn(2+) is bound by residues Cys-259, Cys-270, and Cys-272. GTP contacts are provided by residues Gln-275, 297–299, and Thr-319; that span reads EGR. Asp-331 functions as the Proton acceptor; for GTP cyclohydrolase activity in the catalytic mechanism. The Nucleophile; for GTP cyclohydrolase activity role is filled by Arg-333. Thr-354 and Lys-359 together coordinate GTP.

The protein in the N-terminal section; belongs to the DHBP synthase family. It in the C-terminal section; belongs to the GTP cyclohydrolase II family. The cofactor is Mg(2+). It depends on Mn(2+) as a cofactor. Zn(2+) is required as a cofactor.

The catalysed reaction is D-ribulose 5-phosphate = (2S)-2-hydroxy-3-oxobutyl phosphate + formate + H(+). It catalyses the reaction GTP + 4 H2O = 2,5-diamino-6-hydroxy-4-(5-phosphoribosylamino)-pyrimidine + formate + 2 phosphate + 3 H(+). Its pathway is cofactor biosynthesis; riboflavin biosynthesis; 2-hydroxy-3-oxobutyl phosphate from D-ribulose 5-phosphate: step 1/1. It participates in cofactor biosynthesis; riboflavin biosynthesis; 5-amino-6-(D-ribitylamino)uracil from GTP: step 1/4. Functionally, catalyzes the conversion of D-ribulose 5-phosphate to formate and 3,4-dihydroxy-2-butanone 4-phosphate. Its function is as follows. Catalyzes the conversion of GTP to 2,5-diamino-6-ribosylamino-4(3H)-pyrimidinone 5'-phosphate (DARP), formate and pyrophosphate. In Actinobacillus pleuropneumoniae serotype 7 (strain AP76), this protein is Riboflavin biosynthesis protein RibBA.